The primary structure comprises 402 residues: 1-deoxy-D-xylulose 5-phosphate reductoisomerase (402 aa).

NADPH-binding residues include T25, G26, S27, V28, R52, N53, and N136. K137 lines the 1-deoxy-D-xylulose 5-phosphate pocket. NADPH is bound at residue E138. D162 is a Mn(2+) binding site. 1-deoxy-D-xylulose 5-phosphate contacts are provided by S163, E164, S188, and H211. E164 serves as a coordination point for Mn(2+). Residue G217 coordinates NADPH. The 1-deoxy-D-xylulose 5-phosphate site is built by S224, N229, K230, and E233. Mn(2+) is bound at residue E233.

Belongs to the DXR family. Mg(2+) serves as cofactor. Mn(2+) is required as a cofactor.

It carries out the reaction 2-C-methyl-D-erythritol 4-phosphate + NADP(+) = 1-deoxy-D-xylulose 5-phosphate + NADPH + H(+). It functions in the pathway isoprenoid biosynthesis; isopentenyl diphosphate biosynthesis via DXP pathway; isopentenyl diphosphate from 1-deoxy-D-xylulose 5-phosphate: step 1/6. In terms of biological role, catalyzes the NADPH-dependent rearrangement and reduction of 1-deoxy-D-xylulose-5-phosphate (DXP) to 2-C-methyl-D-erythritol 4-phosphate (MEP). The sequence is that of 1-deoxy-D-xylulose 5-phosphate reductoisomerase from Rhodospirillum centenum (strain ATCC 51521 / SW).